Here is a 188-residue protein sequence, read N- to C-terminus: Ribosome maturation factor RimM (188 aa).

Residues 98–174 enclose the PRC barrel domain; that stretch reads EGTFYYHDLR…HLTADAPAGL (77 aa). The segment at 169–188 is disordered; that stretch reads DAPAGLIGPEPGEEDGAAES. Residues 179–188 show a composition bias toward acidic residues; sequence PGEEDGAAES.

The protein belongs to the RimM family. Binds ribosomal protein uS19.

It localises to the cytoplasm. In terms of biological role, an accessory protein needed during the final step in the assembly of 30S ribosomal subunit, possibly for assembly of the head region. Essential for efficient processing of 16S rRNA. May be needed both before and after RbfA during the maturation of 16S rRNA. It has affinity for free ribosomal 30S subunits but not for 70S ribosomes. The sequence is that of Ribosome maturation factor RimM from Deinococcus radiodurans (strain ATCC 13939 / DSM 20539 / JCM 16871 / CCUG 27074 / LMG 4051 / NBRC 15346 / NCIMB 9279 / VKM B-1422 / R1).